Here is a 90-residue protein sequence, read N- to C-terminus: UPF0298 protein SSU98_1559 (90 aa).

Belongs to the UPF0298 family.

It is found in the cytoplasm. This Streptococcus suis (strain 98HAH33) protein is UPF0298 protein SSU98_1559.